Reading from the N-terminus, the 76-residue chain is Conotoxin Am6.3 (76 aa).

A signal peptide spans 1 to 22; sequence MKLTCMMIIAVLFLTAWTFATA. Cystine bridges form between C52–C67, C59–C71, and C66–C75.

Belongs to the conotoxin O1 superfamily. Post-translationally, is not hydroxylated. In terms of tissue distribution, expressed by the venom duct.

The protein localises to the secreted. Functionally, probable toxin that inhibits ion channels. This is Conotoxin Am6.3 from Conus amadis (Amadis cone).